Consider the following 286-residue polypeptide: Alpha-ketoglutarate-dependent dioxygenase alkB homolog 3 (286 aa).

The interval 21–45 (QAIAQPATTAKSHLHQKPGQTWKNK) is disordered. Residues 22-31 (AIAQPATTAK) show a composition bias toward polar residues. Substrate-binding positions include Trp115 and 141-143 (YTY). The Fe2OG dioxygenase domain maps to 172 to 278 (TFNSLLCNLY…RVNLTFRTVY (107 aa)). Position 177 is a (4R)-5-hydroxyleucine; alternate (Leu177). At Leu177 the chain carries (4R)-5-oxoleucine; alternate. 179–181 (NLY) provides a ligand contact to 2-oxoglutarate. Fe cation-binding residues include His191 and Asp193. Asp194 is a binding site for substrate. His257 is a binding site for Fe cation. 2-oxoglutarate-binding positions include 269 to 275 (RVNLTFR) and Arg275.

The protein belongs to the alkB family. As to quaternary structure, interacts with the ASCC complex composed of ASCC1, ASCC2 and ASCC3. Interacts directly with ASCC3, and is thereby recruited to the ASCC complex. Interacts with OTUD4; the interaction is direct. Interacts with USP7 and USP9X. The cofactor is Fe(2+). Post-translationally, ubiquitinated; undergoes 'Lys-48'-linked polyubiquitination. OTUD4 promotes USP7 and USP9X-dependent deubiquitination of 'Lys-48'-polyubiquitinated ALKBH3 promoting the repair of alkylated DNA lesions. Ubiquitous. Detected in heart, pancreas, skeletal muscle, thymus, testis, ovary, spleen, prostate, small intestine, peripheral blood leukocytes, urinary bladder and colon.

It is found in the nucleus. The protein localises to the cytoplasm. It catalyses the reaction an N(1)-methyladenosine in mRNA + 2-oxoglutarate + O2 = an adenosine in mRNA + formaldehyde + succinate + CO2. It carries out the reaction a methylated nucleobase within DNA + 2-oxoglutarate + O2 = a nucleobase within DNA + formaldehyde + succinate + CO2. The catalysed reaction is an N(1)-methyl-2'-deoxyadenosine in single-stranded DNA + 2-oxoglutarate + O2 = a 2'-deoxyadenosine in single-stranded DNA + formaldehyde + succinate + CO2 + H(+). The enzyme catalyses an N(3)-methyl-2'-deoxycytidine in single-stranded DNA + 2-oxoglutarate + O2 = a 2'-deoxycytidine in single-stranded DNA + formaldehyde + succinate + CO2 + H(+). It catalyses the reaction a 3,N(4)-etheno-2'-deoxycytidine in single-stranded DNA + 2-oxoglutarate + O2 + H2O = a 2'-deoxycytidine in single-stranded DNA + glyoxal + succinate + CO2. Its activity is regulated as follows. Activated by ascorbate. Its function is as follows. Dioxygenase that mediates demethylation of DNA and RNA containing 1-methyladenosine (m1A). Repairs alkylated DNA containing 1-methyladenosine (m1A) and 3-methylcytosine (m3C) by oxidative demethylation. Has a strong preference for single-stranded DNA. Able to process alkylated m3C within double-stranded regions via its interaction with ASCC3, which promotes DNA unwinding to generate single-stranded substrate needed for ALKBH3. Can repair exocyclic 3,N4-ethenocytosine adducs in single-stranded DNA. Also acts on RNA. Demethylates N(1)-methyladenosine (m1A) RNA, an epigenetic internal modification of messenger RNAs (mRNAs) highly enriched within 5'-untranslated regions (UTRs) and in the vicinity of start codons. Requires molecular oxygen, alpha-ketoglutarate and iron. The protein is Alpha-ketoglutarate-dependent dioxygenase alkB homolog 3 of Homo sapiens (Human).